Consider the following 337-residue polypeptide: Transcription factor HBI1 (337 aa).

Residues 119 to 180 (VALKNKRKPE…SKGASENQKL (62 aa)) form a disordered region. The span at 126 to 151 (KPEVKTREEQKTEKKIKVEAETESSM) shows a compositional bias: basic and acidic residues. Residues 152–165 (KGKSNMGNTEASSD) show a composition bias toward polar residues. Positions 191–241 (QATDRHSLAERARREKISKKMKYLQDIVPGCNKVTGKAGMLDEIINYVQCL) constitute a bHLH domain.

As to quaternary structure, homodimer. Interacts with IBH1. As to expression, highly expressed in hypocotyls and cotyledons. Expressed in leaves, stems, and flowers.

The protein localises to the nucleus. Atypical bHLH transcription factor that acts as a positive regulator of cell elongation downstream of multiple external and endogenous signals by direct binding to the promoters and activation of the two expansin genes EXPA1 and EXPA8, encoding cell wall loosening enzymes. Transcriptional activity is inhibited when binding to the bHLH transcription factor IBH1. In Arabidopsis thaliana (Mouse-ear cress), this protein is Transcription factor HBI1 (HBI1).